Reading from the N-terminus, the 503-residue chain is ATP synthase subunit alpha (503 aa).

170 to 177 (GDRQTGKT) serves as a coordination point for ATP.

It belongs to the ATPase alpha/beta chains family. As to quaternary structure, F-type ATPases have 2 components, CF(1) - the catalytic core - and CF(0) - the membrane proton channel. CF(1) has five subunits: alpha(3), beta(3), gamma(1), delta(1), epsilon(1). CF(0) has three main subunits: a(1), b(2) and c(9-12). The alpha and beta chains form an alternating ring which encloses part of the gamma chain. CF(1) is attached to CF(0) by a central stalk formed by the gamma and epsilon chains, while a peripheral stalk is formed by the delta and b chains.

Its subcellular location is the cell inner membrane. It carries out the reaction ATP + H2O + 4 H(+)(in) = ADP + phosphate + 5 H(+)(out). Its function is as follows. Produces ATP from ADP in the presence of a proton gradient across the membrane. The alpha chain is a regulatory subunit. The sequence is that of ATP synthase subunit alpha from Geobacter sulfurreducens (strain ATCC 51573 / DSM 12127 / PCA).